The sequence spans 1402 residues: MRQDVANMFNQNAPAPSFEAIRISIASPEKIRSWSSGEIKKPETINYRTFKPERDGLFCARIFGPTKDYECLCGKYKRIKYRGIVCEKCGVEVTLARVRRERMGHIDLAAPVAHIWFLKSLPSRISTLVDMPLKDVERVLYFESYVVIEPGLTELEPLQLLTEEEYMDAQDRLGEDAFTALIGAEAIREILKSLDLPTLAETLREELRESSSELKTKKYSKRLKVVDSFIQSKAKPEWMILTVVPVIPPDLRPLVPLDGGRFATSDLNDLYRRVINRNNRLKRLMELRAPDIIIRNEKRMLQESVDALFDNGRRGRTITGTNKRPLKSISDMLKGKQGRFRQNLLGKRVDYSGRSVIVVGPNLKLHECGLPKKMALELFKPFIYARLDAKGLAGTVKAAKKLVEKEKPEVWDILDEVIREHPVLLNRAPTLHRLGIQAFEPKLIEGKAIQLHPLVCAAFNADFDGDQMAVHVPLSLEAQLECRVLMMSTNNILSPANGKPIIVPSQDIILGLYYLSLDRKGEIGEGMVFADLAEIEHALDAGLVSLHSKVRALYDGVDSDGKPERRIIDTTPGRYMVANILPRSKAIGPELVNTVLSKKAIGKIIDEVYRLCGQKATVIFCDKMMELGFREACKAGISFGKDDMVIPEAKKRLVDATKDLVSDYERQYADGLITRGEKYNKVVDAWSSCTDKVADAMMESAAKMQVSRGKEQVNSIFMMADSGARGSKNQMKQLAGMRGLMAKPSGEIIETPIISNFKEGLTVLEYFNSTHGARKGLADTALKTANSGYLTRRLVDVAQDCIINEDDCGTEKGIDINAVMEGADVVVSLNERILGRVIAEDIKGPDGKLVVPANTYVDEDVAALIDTATVDRVKVRSPLTCETKNGICAQCYGRDLARGTLVNRGEAVGVIAAQSIGEPGTQLTMRTFHIGGAAQVADQSSLEASFEGTVRFTDAEIVTRKDKTIVVVGRRMQVEIVDADGRTRQSFRPAYGTRLMAKDGDKVMPGKLLADWDPFAQPIVSEVAGEARFIDLSEGTTVREETDEATGISARVVVDPRSTSKTADLKPSIQIVDASGKPVKLPNGSPATYVLSVGAILSVSDGDRIEPGDTLSRVATGGAKTKDITGGLPRVAELFEARRPKDHAIIAEVDGRVEYGRDYKNKRKVTIVPTEEGREPIDYLVPKGKHLAVQDGDFIKRGEYLMDGNPAPQDILSTLGVEALANYLTDEVQKVYRLQGVPINDKHIEVIVRQMLQKVEITDGGDTVFITGEHIDAIEFDEANEAIRKSRKKDQREATANPLLLGITKASLQTRSFISAASFQETTRVLTEAAIQGKIDTLDGLKENVIVGRLIPAGTGGGIRQFRRVAAERDLKLKAKRAAAMAKAEEGINLVSLPAPERDTAE.

The Zn(2+) site is built by Cys71, Cys73, Cys86, and Cys89. Asp462, Asp464, and Asp466 together coordinate Mg(2+). 4 residues coordinate Zn(2+): Cys808, Cys881, Cys888, and Cys891.

Belongs to the RNA polymerase beta' chain family. As to quaternary structure, the RNAP catalytic core consists of 2 alpha, 1 beta, 1 beta' and 1 omega subunit. When a sigma factor is associated with the core the holoenzyme is formed, which can initiate transcription. It depends on Mg(2+) as a cofactor. The cofactor is Zn(2+).

It carries out the reaction RNA(n) + a ribonucleoside 5'-triphosphate = RNA(n+1) + diphosphate. Its function is as follows. DNA-dependent RNA polymerase catalyzes the transcription of DNA into RNA using the four ribonucleoside triphosphates as substrates. This Hyphomonas neptunium (strain ATCC 15444) protein is DNA-directed RNA polymerase subunit beta'.